The following is a 399-amino-acid chain: UDP-galactopyranose mutase (399 aa).

The FAD site is built by Phe18, Glu38, Asn46, and Leu66. Residues Phe157, Thr162, Trp166, and Tyr191 each contribute to the UDP-alpha-D-galactose site. 224 to 225 provides a ligand contact to FAD; it reads DW. Residues Asn282, Arg292, and Tyr328 each contribute to the UDP-alpha-D-galactose site. Arg360 contributes to the FAD binding site. Tyr366 provides a ligand contact to UDP-alpha-D-galactose. Residue 367–369 participates in FAD binding; sequence LDM.

This sequence belongs to the UDP-galactopyranose/dTDP-fucopyranose mutase family. As to quaternary structure, homotetramer. It depends on FAD as a cofactor.

It carries out the reaction UDP-alpha-D-galactose = UDP-alpha-D-galactofuranose. It functions in the pathway cell wall biogenesis; cell wall polysaccharide biosynthesis. Catalyzes the interconversion through a 2-keto intermediate of uridine diphosphogalactopyranose (UDP-GalP) into uridine diphosphogalactofuranose (UDP-GalF) which is a key building block for cell wall construction in Mycobacterium tuberculosis. This Mycobacterium tuberculosis (strain CDC 1551 / Oshkosh) protein is UDP-galactopyranose mutase (glf).